The sequence spans 264 residues: S-adenosylmethionine decarboxylase proenzyme (264 aa).

S113 (schiff-base intermediate with substrate; via pyruvic acid) is an active-site residue. S113 is modified (pyruvic acid (Ser); by autocatalysis). The active-site Proton acceptor; for processing activity is H118. C141 acts as the Proton donor; for catalytic activity in catalysis.

Belongs to the prokaryotic AdoMetDC family. Type 2 subfamily. Heterooctamer of four alpha and four beta chains arranged as a tetramer of alpha/beta heterodimers. It depends on pyruvate as a cofactor. Is synthesized initially as an inactive proenzyme. Formation of the active enzyme involves a self-maturation process in which the active site pyruvoyl group is generated from an internal serine residue via an autocatalytic post-translational modification. Two non-identical subunits are generated from the proenzyme in this reaction, and the pyruvate is formed at the N-terminus of the alpha chain, which is derived from the carboxyl end of the proenzyme. The post-translation cleavage follows an unusual pathway, termed non-hydrolytic serinolysis, in which the side chain hydroxyl group of the serine supplies its oxygen atom to form the C-terminus of the beta chain, while the remainder of the serine residue undergoes an oxidative deamination to produce ammonia and the pyruvoyl group blocking the N-terminus of the alpha chain.

It carries out the reaction S-adenosyl-L-methionine + H(+) = S-adenosyl 3-(methylsulfanyl)propylamine + CO2. Its pathway is amine and polyamine biosynthesis; S-adenosylmethioninamine biosynthesis; S-adenosylmethioninamine from S-adenosyl-L-methionine: step 1/1. In terms of biological role, catalyzes the decarboxylation of S-adenosylmethionine to S-adenosylmethioninamine (dcAdoMet), the propylamine donor required for the synthesis of the polyamines spermine and spermidine from the diamine putrescine. The protein is S-adenosylmethionine decarboxylase proenzyme of Hahella chejuensis (strain KCTC 2396).